The following is a 157-amino-acid chain: Crossover junction endodeoxyribonuclease RuvC (157 aa).

Catalysis depends on residues D7, E67, and D140. Mg(2+)-binding residues include D7, E67, and D140.

The protein belongs to the RuvC family. Homodimer which binds Holliday junction (HJ) DNA. The HJ becomes 2-fold symmetrical on binding to RuvC with unstacked arms; it has a different conformation from HJ DNA in complex with RuvA. In the full resolvosome a probable DNA-RuvA(4)-RuvB(12)-RuvC(2) complex forms which resolves the HJ. Requires Mg(2+) as cofactor.

It localises to the cytoplasm. The enzyme catalyses Endonucleolytic cleavage at a junction such as a reciprocal single-stranded crossover between two homologous DNA duplexes (Holliday junction).. In terms of biological role, the RuvA-RuvB-RuvC complex processes Holliday junction (HJ) DNA during genetic recombination and DNA repair. Endonuclease that resolves HJ intermediates. Cleaves cruciform DNA by making single-stranded nicks across the HJ at symmetrical positions within the homologous arms, yielding a 5'-phosphate and a 3'-hydroxyl group; requires a central core of homology in the junction. The consensus cleavage sequence is 5'-(A/T)TT(C/G)-3'. Cleavage occurs on the 3'-side of the TT dinucleotide at the point of strand exchange. HJ branch migration catalyzed by RuvA-RuvB allows RuvC to scan DNA until it finds its consensus sequence, where it cleaves and resolves the cruciform DNA. This is Crossover junction endodeoxyribonuclease RuvC from Thermosipho melanesiensis (strain DSM 12029 / CIP 104789 / BI429).